Here is a 130-residue protein sequence, read N- to C-terminus: UPF0102 protein TDE_2303 (130 aa).

It belongs to the UPF0102 family.

This Treponema denticola (strain ATCC 35405 / DSM 14222 / CIP 103919 / JCM 8153 / KCTC 15104) protein is UPF0102 protein TDE_2303.